The sequence spans 183 residues: Efficient mitochondria targeting-associated protein 19 (183 aa).

At 1–25 (MKVVSLRRIYSSEIYKLPTTRLHMD) the chain is on the cytoplasmic side. The EXPERA domain maps to 24–156 (MDTLYYYYFV…PYLAIPLWMA (133 aa)). The helical transmembrane segment at 26 to 46 (TLYYYYFVSHLAAALFVDLPI) threads the bilayer. Over 47-81 (TEWLGGSLSCLSGLRRFYLSTYEDPILLIPAPWKT) the chain is Lumenal. A helical membrane pass occupies residues 82-102 (ALFSSELFFQVPFFIWVSLRL). Topologically, residues 103 to 110 (RKKARDPV) are cytoplasmic. The helical transmembrane segment at 111–131 (LWVAILIYGVHAFTTTWCCMF) threads the bilayer. Over 132–138 (ELFAEKK) the chain is Lumenal. A helical membrane pass occupies residues 139–159 (WMIMSFYFPYLAIPLWMAIDM). Residues 160 to 183 (GGRLVKSCHAAKSGPSSTITSKSD) lie on the Cytoplasmic side of the membrane.

It belongs to the TMEM97/sigma-2 receptor family.

The protein resides in the endoplasmic reticulum membrane. Functionally, part of an import route for newly synthesized mitochondrial proteins termed the ER-SURF pathway (ER surface-mediated protein targeting), which retrieves mitochondrial precursor proteins from the ER surface and reroutes them to mitochondria for efficient mitochondrial import. Acts as a quality control factor in the ER, promoting the proteolytic degradation of nonproductive and extramitochondrial precursor proteins in the ER membrane thus removing them from the ER surface. This Schizosaccharomyces pombe (strain 972 / ATCC 24843) (Fission yeast) protein is Efficient mitochondria targeting-associated protein 19 (ema19).